The primary structure comprises 482 residues: O-acyltransferase ausP (482 aa).

Catalysis depends on proton acceptor residues His180 and Asp412.

This sequence belongs to the plant acyltransferase family. In terms of assembly, monomer.

It functions in the pathway secondary metabolite biosynthesis; terpenoid biosynthesis. Its function is as follows. O-acyltransferase; part of the gene cluster B that mediates the biosynthesis of the fungal meroterpenoid acetoxydehydroaustin. The first step of the pathway is the synthesis of 3,5-dimethylorsellinic acid by the polyketide synthase ausA. 3,5-dimethylorsellinic acid is then prenylated by the polyprenyl transferase ausN. Further epoxidation by the FAD-dependent monooxygenase ausM and cyclization by the probable terpene cyclase ausL lead to the formation of protoaustinoid A. Protoaustinoid A is then oxidized to spiro-lactone preaustinoid A3 by the combined action of the FAD-binding monooxygenases ausB and ausC, and the dioxygenase ausE. Acid-catalyzed keto-rearrangement and ring contraction of the tetraketide portion of preaustinoid A3 by ausJ lead to the formation of preaustinoid A4. The aldo-keto reductase ausK, with the help of ausH, is involved in the next step by transforming preaustinoid A4 into isoaustinone which is in turn hydroxylated by the P450 monooxygenase ausI to form austinolide. The cytochrome P450 monooxygenase ausG then modifies austinolide to austinol. Austinol is further acetylated to austin by the O-acetyltransferase ausP, which spontaneously changes to dehydroaustin. The cytochrome P450 monooxygenase then converts dehydroaustin is into 7-dehydrodehydroaustin. The hydroxylation catalyzed by ausR permits the second O-acetyltransferase ausQ to add an additional acetyl group to the molecule, leading to the formation of acetoxydehydroaustin. Due to genetic rearrangements of the clusters and the subsequent loss of some enzymes, the end product of the Penicillium brasilianum austinoid biosynthesis clusters is acetoxydehydroaustin. This Penicillium brasilianum protein is O-acyltransferase ausP.